Reading from the N-terminus, the 493-residue chain is Glutamyl-tRNA(Gln) amidotransferase subunit A (493 aa).

Catalysis depends on charge relay system residues lysine 79 and serine 159. The active-site Acyl-ester intermediate is serine 183.

The protein belongs to the amidase family. GatA subfamily. Heterotrimer of A, B and C subunits.

The catalysed reaction is L-glutamyl-tRNA(Gln) + L-glutamine + ATP + H2O = L-glutaminyl-tRNA(Gln) + L-glutamate + ADP + phosphate + H(+). Functionally, allows the formation of correctly charged Gln-tRNA(Gln) through the transamidation of misacylated Glu-tRNA(Gln) in organisms which lack glutaminyl-tRNA synthetase. The reaction takes place in the presence of glutamine and ATP through an activated gamma-phospho-Glu-tRNA(Gln). The polypeptide is Glutamyl-tRNA(Gln) amidotransferase subunit A (Brucella ovis (strain ATCC 25840 / 63/290 / NCTC 10512)).